Reading from the N-terminus, the 1489-residue chain is MIPRWLLLTLSLLLVWASHPAAAKGNEPNIVTHELDAPPADLFYFHGTNTILYRDRRSLTAHVSFDGGEEWETVKGNDGTIEGTVDLIWRHPFDDNRAYILGENGKHWITTDQAKSWRPFQVDVLPFASMRSFPLEFNGWDPKKVIFMGLDCTILGCLPQTFYTTDDFETVKPLREMTLQCMWAASRPQFALDIDMPKSTGDRILCVVPGLKGPFEHTRTERLIYSDSFFKDDAEGTEAKLDHGKPLSGVSLQIRSVSKYIVARLQSRGTQEQALYVSDDSNVWHRAEFGKHRIEEDAYTILESTNYSIQIDVQTTWQDNRMGSLFSSNSNGTYFTQNIEHTNEDLNGLVDFERVTGIHGITIVNTVKNWEEAKKSDSNKKKLISSISFDDGRTFQPLKADKDELHLHSMTTYAALHEMPLPDHRMFSSPAPGLVMGVGNTGGHLEDYSKGDLYVSDNAGLTWRRALKGPHRYEFGDQGGVITAVLDSSQTDKVQFSIDHGKEWESISLGQKIRPLFLVSTPDSTSLKFLLVGTSSDDTTKTLMFFIDFDGLHERECGSGDLEEWTARLNEKGEPDCLMGQKQFFQRRKANADCFIKKEFAISGPEFQLCKCSAEDFECDYNFVRSEDRKECVPAVPLTPPAGKCKDPSDKYMGPSGWRLIPGNACIREGGEDLEREIERSCSNVTGPPLITDGKPRAGKPQTISAKWTNYFYLERQASNNGVDETIMMLTDKYELHVSRDHGRNWKQIHPDEKFIEMVQHPYFSDTAFFLTDGKRVYYTINHGDSFHFFDAPSVPNKEYIRKLAFHEKFQDSLIWIGHKDCEGKNCRSQAYVTDKRGASWEPMLIGIADGGCNFGYQEGRNNSEKLVICEQYKDEEKNNNRQLVISDDYFSTMEVKFENIARSATKNGFEVVAWYEGDQKEYLNASVSVDGRTYANAHFPFNIKVPQYTVLPSSPHALFLLVMVNGGGERSFGSLVKSNSNGTYFVQSLEGLNVNDRGYTDYDELQGLEGVAIANVVSNREEVLNKGAAKKLRTMITHNDGGQWMLLAPPSKDVDGKNFDCSVTEGKGTEKCALHFHGYTERRDYRDTLYSGSAIGLMLALGNVGEHLTSASEADTYLTRDGGISWTQVKKGQYMWEFGAAGSVIVLVSDRKATKVVHYTLDEGMSWHEFQFAEKELVIDDISTVPSDTSKKFLLWGIDGGKRVIVTLDFSGIWSRDCNDDESDYYNWAPTHPFQEENCIFGHVEEYHRKKPAAECWNAWREPHIHSIGRNCTCTRADFECDYNYEIQTDGSCGLVPGLQPQDHVAQCSQDPDKVEYWEPTGYRRIPQTTCEGGLLLDQDVSKPCPNKEEEYQKKHGISGTGLFFAIVTPIAVAVAVGWYAYTHWDGKFGQIRLGDSGGSQSWLSRDSMLVAVPVALIAGIVAVAQSLPLLVKSLARSSSGLFGRRGMQRPYATRGSFAARRGDYSSVVDDEDELLGADDFDDEEDQA.

A signal peptide spans 1 to 23 (MIPRWLLLTLSLLLVWASHPAAA). Residues 24–1362 (KGNEPNIVTH…YQKKHGISGT (1339 aa)) are Lumenal-facing. The stretch at 63–72 (VSFDGGEEWE) is one BNR 1 repeat. N-linked (GlcNAc...) asparagine glycans are attached at residues Asn306 and Asn331. BNR repeat units follow at residues 387–396 (ISFDDGRTFQ), 454–464 (YVSDNAGLTWR), and 495–505 (QFSIDHGKEWE). The N-linked (GlcNAc...) asparagine glycan is linked to Asn684. Residues 738–747 (VSRDHGRNWK) form a BNR 5 repeat. Residues Asn862, Asn925, and Asn982 are each glycosylated (N-linked (GlcNAc...) asparagine). BNR repeat units follow at residues 1118–1128 (YLTRDGGISWT) and 1160–1169 (YTLDEGMSWH). Asn1272 is a glycosylation site (N-linked (GlcNAc...) asparagine). Residues 1363–1383 (GLFFAIVTPIAVAVAVGWYAY) traverse the membrane as a helical segment. Residues 1384-1410 (THWDGKFGQIRLGDSGGSQSWLSRDSM) lie on the Cytoplasmic side of the membrane. Residues 1411–1431 (LVAVPVALIAGIVAVAQSLPL) traverse the membrane as a helical segment. Residues 1432 to 1489 (LVKSLARSSSGLFGRRGMQRPYATRGSFAARRGDYSSVVDDEDELLGADDFDDEEDQA) lie on the Lumenal side of the membrane.

It belongs to the VPS10-related sortilin family.

It is found in the golgi apparatus. Its subcellular location is the trans-Golgi network membrane. It localises to the prevacuolar compartment membrane. Its function is as follows. Functions as a sorting receptor in the Golgi compartment required for the intracellular sorting and delivery of soluble vacuolar proteins, like carboxypeptidase Y (CPY) and proteinase A. Executes multiple rounds of sorting by cycling between the late Golgi and a prevacuolar endosome-like compartment. This is Vacuolar protein sorting/targeting protein 10 (vps10) from Penicillium rubens (strain ATCC 28089 / DSM 1075 / NRRL 1951 / Wisconsin 54-1255) (Penicillium chrysogenum).